The primary structure comprises 324 residues: Glutamyl-Q tRNA(Asp) synthetase (324 aa).

L-glutamate contacts are provided by residues 5 to 9 (RLAPS) and Glu-41. The 'HIGH' region motif lies at 8 to 18 (PSPTGNIHLGN). Zn(2+) contacts are provided by Cys-105, Cys-107, Tyr-128, and Cys-132. L-glutamate contacts are provided by Tyr-193 and Arg-211. A 'KMSKS' region motif is present at residues 249–253 (RLAKR). Lys-252 contacts ATP.

It belongs to the class-I aminoacyl-tRNA synthetase family. GluQ subfamily. Zn(2+) is required as a cofactor.

Its function is as follows. Catalyzes the tRNA-independent activation of glutamate in presence of ATP and the subsequent transfer of glutamate onto a tRNA(Asp). Glutamate is transferred on the 2-amino-5-(4,5-dihydroxy-2-cyclopenten-1-yl) moiety of the queuosine in the wobble position of the QUC anticodon. In Nitratidesulfovibrio vulgaris (strain ATCC 29579 / DSM 644 / CCUG 34227 / NCIMB 8303 / VKM B-1760 / Hildenborough) (Desulfovibrio vulgaris), this protein is Glutamyl-Q tRNA(Asp) synthetase.